A 232-amino-acid chain; its full sequence is 5'-methylthioadenosine/S-adenosylhomocysteine nucleosidase (232 aa).

Glu-12 functions as the Proton acceptor in the catalytic mechanism. Substrate-binding positions include Gly-78, Ile-152, and 173-174 (ME). Asp-197 (proton donor) is an active-site residue.

It belongs to the PNP/UDP phosphorylase family. MtnN subfamily. As to quaternary structure, homodimer.

It catalyses the reaction S-adenosyl-L-homocysteine + H2O = S-(5-deoxy-D-ribos-5-yl)-L-homocysteine + adenine. It carries out the reaction S-methyl-5'-thioadenosine + H2O = 5-(methylsulfanyl)-D-ribose + adenine. The catalysed reaction is 5'-deoxyadenosine + H2O = 5-deoxy-D-ribose + adenine. It functions in the pathway amino-acid biosynthesis; L-methionine biosynthesis via salvage pathway; S-methyl-5-thio-alpha-D-ribose 1-phosphate from S-methyl-5'-thioadenosine (hydrolase route): step 1/2. Its function is as follows. Catalyzes the irreversible cleavage of the glycosidic bond in both 5'-methylthioadenosine (MTA) and S-adenosylhomocysteine (SAH/AdoHcy) to adenine and the corresponding thioribose, 5'-methylthioribose and S-ribosylhomocysteine, respectively. Also cleaves 5'-deoxyadenosine, a toxic by-product of radical S-adenosylmethionine (SAM) enzymes, into 5-deoxyribose and adenine. Thus, is required for in vivo function of the radical SAM enzymes biotin synthase and lipoic acid synthase, that are inhibited by 5'-deoxyadenosine accumulation. This Cronobacter sakazakii (strain ATCC BAA-894) (Enterobacter sakazakii) protein is 5'-methylthioadenosine/S-adenosylhomocysteine nucleosidase.